The sequence spans 241 residues: Ribonuclease PH (241 aa).

Residues R89 and 127-129 each bind phosphate; that span reads GTR.

This sequence belongs to the RNase PH family. In terms of assembly, homohexameric ring arranged as a trimer of dimers.

It catalyses the reaction tRNA(n+1) + phosphate = tRNA(n) + a ribonucleoside 5'-diphosphate. Phosphorolytic 3'-5' exoribonuclease that plays an important role in tRNA 3'-end maturation. Removes nucleotide residues following the 3'-CCA terminus of tRNAs; can also add nucleotides to the ends of RNA molecules by using nucleoside diphosphates as substrates, but this may not be physiologically important. Probably plays a role in initiation of 16S rRNA degradation (leading to ribosome degradation) during starvation. This is Ribonuclease PH from Xanthomonas oryzae pv. oryzae (strain MAFF 311018).